The chain runs to 100 residues: Large ribosomal subunit protein eL21 (100 aa).

The protein belongs to the eukaryotic ribosomal protein eL21 family.

This chain is Large ribosomal subunit protein eL21, found in Pyrobaculum arsenaticum (strain DSM 13514 / JCM 11321 / PZ6).